The chain runs to 428 residues: C4-dicarboxylate transport protein (428 aa).

9 consecutive transmembrane segments (helical) span residues 4-24 (SLFKSLYFQVLTAIAIGILLG), 44-64 (LIKMIIAPVIFCTVVTGIAGM), 76-96 (VALLYFEIVSTIALIIGLIIV), 142-162 (IGAFASGNILQVLLFAVLFGF), 184-204 (VIFGIINMIMRLAPIGAFGAM), 222-242 (LIICFYITCILFVVVVLGTIA), 289-309 (VVGLVIPTGYSFNLDGTSIYL), 326-346 (IFHQITLLVVLLLSSKGAAGV), and 352-372 (IVLAATISAVGHLPVAGLALI).

This sequence belongs to the dicarboxylate/amino acid:cation symporter (DAACS) (TC 2.A.23) family.

It is found in the cell inner membrane. Its function is as follows. Responsible for the transport of dicarboxylates such as succinate, fumarate, and malate from the periplasm across the membrane. The protein is C4-dicarboxylate transport protein of Salmonella gallinarum (strain 287/91 / NCTC 13346).